The chain runs to 254 residues: 3-deoxy-manno-octulosonate cytidylyltransferase (254 aa).

The protein belongs to the KdsB family.

It is found in the cytoplasm. It catalyses the reaction 3-deoxy-alpha-D-manno-oct-2-ulosonate + CTP = CMP-3-deoxy-beta-D-manno-octulosonate + diphosphate. It participates in nucleotide-sugar biosynthesis; CMP-3-deoxy-D-manno-octulosonate biosynthesis; CMP-3-deoxy-D-manno-octulosonate from 3-deoxy-D-manno-octulosonate and CTP: step 1/1. The protein operates within bacterial outer membrane biogenesis; lipopolysaccharide biosynthesis. Activates KDO (a required 8-carbon sugar) for incorporation into bacterial lipopolysaccharide in Gram-negative bacteria. In Pseudomonas aeruginosa (strain ATCC 15692 / DSM 22644 / CIP 104116 / JCM 14847 / LMG 12228 / 1C / PRS 101 / PAO1), this protein is 3-deoxy-manno-octulosonate cytidylyltransferase.